The primary structure comprises 511 residues: Glucans biosynthesis protein G (511 aa).

The first 22 residues, 1 to 22 (MMKMRWLGAAIMLTLYASSSWA), serve as a signal peptide directing secretion.

The protein belongs to the OpgD/OpgG family.

Its subcellular location is the periplasm. The protein operates within glycan metabolism; osmoregulated periplasmic glucan (OPG) biosynthesis. Its function is as follows. Involved in the biosynthesis of osmoregulated periplasmic glucans (OPGs). This Salmonella paratyphi A (strain ATCC 9150 / SARB42) protein is Glucans biosynthesis protein G.